The sequence spans 247 residues: Ribonuclease 3 (247 aa).

In terms of domain architecture, RNase III spans 23-149; the sequence is HADLLERLGV…LLGAIFRQHG (127 aa). Glutamate 62 contributes to the Mg(2+) binding site. The active site involves aspartate 66. 2 residues coordinate Mg(2+): aspartate 135 and glutamate 138. Residue glutamate 138 is part of the active site. Residues 176–244 form the DRBM domain; that stretch reads DWKTTLQEEL…ARQAFLKLRE (69 aa).

This sequence belongs to the ribonuclease III family. In terms of assembly, homodimer. Requires Mg(2+) as cofactor.

It localises to the cytoplasm. It carries out the reaction Endonucleolytic cleavage to 5'-phosphomonoester.. Functionally, digests double-stranded RNA. Involved in the processing of primary rRNA transcript to yield the immediate precursors to the large and small rRNAs (23S and 16S). Processes some mRNAs, and tRNAs when they are encoded in the rRNA operon. Processes pre-crRNA and tracrRNA of type II CRISPR loci if present in the organism. The polypeptide is Ribonuclease 3 (Corynebacterium efficiens (strain DSM 44549 / YS-314 / AJ 12310 / JCM 11189 / NBRC 100395)).